A 127-amino-acid chain; its full sequence is MKLMLETGLMFGEEAQLEVTMRELTTGDLLDAEMAAERLVMTPEGEAVLAKSPALFGYELLRRQIASVGKINGPISMRQLRSLTTEDLNRISLYAQSWESAKAEQVVSRGRLDTADQETGKDLSAVS.

Residues 107–127 (VSRGRLDTADQETGKDLSAVS) are disordered. A compositionally biased stretch (basic and acidic residues) spans 110–121 (GRLDTADQETGK).

The protein to phage Mu protein gp41.

This Haemophilus influenzae (strain ATCC 51907 / DSM 11121 / KW20 / Rd) protein is Mu-like prophage FluMu protein gp41.